Reading from the N-terminus, the 1224-residue chain is uncharacterized protein (1224 aa).

6 disordered regions span residues 1-67 (MNQD…SSSI), 111-151 (QQSH…PPPL), 193-270 (QTEL…DPNI), 316-416 (DYNN…TVKK), 430-957 (SDSG…QEEK), and 1078-1167 (SFLP…TSHV). Over residues 10-48 (SFHSNNNSNSNHHHSYNNSINSGSSSSGSNNSSNNNSFN) the composition is skewed to low complexity. A compositionally biased stretch (acidic residues) spans 49–58 (DEIEGGEIQE). Low complexity-rich tracts occupy residues 126–140 (SSSSSSSSSSSSSSS), 193–212 (QTELQNKSTPSKTSSASSPP), and 228–241 (SAPTSAPTSSSVSS). Residues 242–255 (LTQPQKPKSVQYSQ) are compositionally biased toward polar residues. The span at 260 to 270 (EIREEKVDPNI) shows a compositional bias: basic and acidic residues. Residues 316–338 (DYNNSNSNNSNNNNNNNNSITEN) are compositionally biased toward low complexity. The segment covering 341 to 353 (DKMINNQPSSTNS) has biased composition (polar residues). Composition is skewed to low complexity over residues 379–413 (TTTTTTTTTTSSTSEPIKSPNSSSSTNSSASTTPT) and 430–450 (SDSGTNKESNSSNSSSTTSTP). 2 stretches are compositionally biased toward basic and acidic residues: residues 451–585 (KSKD…DKKK) and 630–646 (EIDKSDKRSQKKSKVES). Low complexity predominate over residues 662–719 (TTTTTTSTSSSSSLPSLSSSSSSLPLPSSSSSSSSSSSSSSSSSSSSSSSSSSSTTST). Positions 727-750 (PPPPPQQPPPPPPQQPPPPPPPIN) are enriched in pro residues. The segment covering 755–892 (SEHDKKIIEK…SDRDRDRKDS (138 aa)) has biased composition (basic and acidic residues). Low complexity predominate over residues 893–933 (NSNNNSNNNNNNNNNNNNNNNNNNNNKKDNNNNNNNNNNNN). Positions 948-957 (TPKKTKQEEK) are enriched in basic and acidic residues. Residues 950 to 991 (KKTKQEEKLIRSQIDQIKEDAKDLKKLAKELQSKNQNECLEM) adopt a coiled-coil conformation. Low complexity-rich tracts occupy residues 1078–1108 (SFLPNSSSSSKSSSSSSSSSNQPANPATAPL) and 1114–1165 (NPSE…PNTS).

This is an uncharacterized protein from Dictyostelium discoideum (Social amoeba).